The following is a 241-amino-acid chain: Large ribosomal subunit protein eL32 (241 aa).

Residues 1–16 (MADNEEDVEAEEEYTE) are compositionally biased toward acidic residues. 2 disordered regions span residues 1–47 (MADN…GADQ) and 68–182 (VGGL…HPSG). Positions 29-44 (ESLREAGFESVEDVRG) are enriched in basic and acidic residues. Residues 73 to 96 (VESETEAEVEEEGGEEAPDEDVET) are compositionally biased toward acidic residues. Over residues 103-116 (LTEKTPDLSDEDAR) the composition is skewed to basic and acidic residues. Residues 133–159 (DHHKKKRVSTSWRKPRGQLSKQRRGIK) are compositionally biased toward basic residues.

The protein belongs to the eukaryotic ribosomal protein eL32 family. Part of the 50S ribosomal subunit. Interacts weakly with protein L15.

Binds to the 23S rRNA. The polypeptide is Large ribosomal subunit protein eL32 (rpl32e) (Haloarcula marismortui (strain ATCC 43049 / DSM 3752 / JCM 8966 / VKM B-1809) (Halobacterium marismortui)).